Reading from the N-terminus, the 967-residue chain is Vacuolar membrane protease (967 aa).

Topologically, residues 1–16 (MARPSLSRSNPLGFTP) are cytoplasmic. A helical transmembrane segment spans residues 17 to 37 (WPVTVITAVVYLALVVPLLVV). At 38-387 (HHVVPSAPSS…SAFVVFELHT (350 aa)) the chain is on the vacuolar side. N-linked (GlcNAc...) asparagine glycosylation is found at asparagine 53 and asparagine 119. The Zn(2+) site is built by histidine 171 and aspartate 183. The Proton acceptor role is filled by glutamate 217. Residues glutamate 218, glutamate 243, and histidine 316 each coordinate Zn(2+). Residues 388 to 408 (LFALSVTLLVVAPLVLLVTSI) form a helical membrane-spanning segment. Residues 409 to 441 (ALNRADKMYLFRASASPEDSDGSEAVLLHGVRG) are Cytoplasmic-facing. A helical transmembrane segment spans residues 442–462 (FFRFPFLLVIPTAVTVGLAYL). The Vacuolar portion of the chain corresponds to 463–472 (VTKFNPYIIH). The helical transmembrane segment at 473–493 (SSEYAVWSMMISAWVFLAWFV) threads the bilayer. Residues 494 to 507 (SRVADFARPSAFHR) lie on the Cytoplasmic side of the membrane. A helical transmembrane segment spans residues 508 to 528 (VYTLTWLFLVEWVLLVISTVY). Residues 529–532 (ENKY) are Vacuolar-facing. The chain crosses the membrane as a helical span at residues 533–553 (GLAGGYFVFFAFAGTFLATWI). The Cytoplasmic portion of the chain corresponds to 554-663 (SYLELFALPR…WSIHLPKWVW (110 aa)). A disordered region spans residues 579–612 (SSHGSRLGTASGEDVEDGEDEDEDDDGTTAEATE). Residues 591-606 (EDVEDGEDEDEDDDGT) show a composition bias toward acidic residues. Residues 664-684 (VLQFLLTAPLVLTFVGPLALL) form a helical membrane-spanning segment. The Vacuolar portion of the chain corresponds to 685–700 (LTSALRQTGQDGSSSL). A helical membrane pass occupies residues 701 to 721 (FIYIAVAALTTLLFIPLLPFI). The Cytoplasmic portion of the chain corresponds to 722 to 727 (HRYTHH). Residues 728-748 (IPLFLLCVFAGTLIYNLVAFP) form a helical membrane-spanning segment. At 749-967 (FSPANRLKLF…LVEGSRRFEI (219 aa)) the chain is on the vacuolar side. 2 N-linked (GlcNAc...) asparagine glycosylation sites follow: asparagine 795 and asparagine 832.

Belongs to the peptidase M28 family. Zn(2+) is required as a cofactor.

It localises to the vacuole membrane. In terms of biological role, may be involved in vacuolar sorting and osmoregulation. The chain is Vacuolar membrane protease from Neosartorya fischeri (strain ATCC 1020 / DSM 3700 / CBS 544.65 / FGSC A1164 / JCM 1740 / NRRL 181 / WB 181) (Aspergillus fischerianus).